A 186-amino-acid polypeptide reads, in one-letter code: ATP synthase subunit delta (186 aa).

The protein belongs to the ATPase delta chain family. As to quaternary structure, F-type ATPases have 2 components, F(1) - the catalytic core - and F(0) - the membrane proton channel. F(1) has five subunits: alpha(3), beta(3), gamma(1), delta(1), epsilon(1). F(0) has three main subunits: a(1), b(2) and c(10-14). The alpha and beta chains form an alternating ring which encloses part of the gamma chain. F(1) is attached to F(0) by a central stalk formed by the gamma and epsilon chains, while a peripheral stalk is formed by the delta and b chains.

Its subcellular location is the cell inner membrane. F(1)F(0) ATP synthase produces ATP from ADP in the presence of a proton or sodium gradient. F-type ATPases consist of two structural domains, F(1) containing the extramembraneous catalytic core and F(0) containing the membrane proton channel, linked together by a central stalk and a peripheral stalk. During catalysis, ATP synthesis in the catalytic domain of F(1) is coupled via a rotary mechanism of the central stalk subunits to proton translocation. Its function is as follows. This protein is part of the stalk that links CF(0) to CF(1). It either transmits conformational changes from CF(0) to CF(1) or is implicated in proton conduction. This Chelativorans sp. (strain BNC1) protein is ATP synthase subunit delta.